A 692-amino-acid polypeptide reads, in one-letter code: Proprotein convertase subtilisin/kexin type 9 (692 aa).

Residues 1–30 (MGTVSSRRSWWPLPLPLLLLLLLGPAGARA) form the signal peptide. A propeptide spanning residues 31 to 152 (QEDEDGDYEE…IEEDSSVFAQ (122 aa)) is cleaved from the precursor. Y38 is modified (sulfotyrosine). S47 bears the Phosphoserine mark. One can recognise an Inhibitor I9 domain in the interval 77–149 (TYVVVLKEET…VDYIEEDSSV (73 aa)). Residues 155–444 (PWNLERITPA…VLTPNLVAAL (290 aa)) enclose the Peptidase S8 domain. Catalysis depends on charge relay system residues D186 and H226. 2 disulfide bridges follow: C223–C255 and C323–C358. The active-site Charge relay system is the S386. The tract at residues 450-692 (RAGWQLFCRT…HLVQASQELQ (243 aa)) is C-terminal domain. 3 disulfides stabilise this stretch: C457/C527, C477/C526, and C486/C509. Residue N533 is glycosylated (N-linked (GlcNAc...) asparagine). Disulfide bonds link C534–C601, C552–C600, C562–C588, C608–C679, C626–C678, and C635–C654. S688 carries the post-translational modification Phosphoserine.

Belongs to the peptidase S8 family. As to quaternary structure, monomer. Can self-associate to form dimers and higher multimers which may have increased LDLR degrading activity. The precursor protein but not the mature protein may form multimers. Interacts with APOB, VLDLR, LRP8/APOER2 and BACE1. The full-length immature form (pro-PCSK9) interacts with SCNN1A, SCNN1B and SCNN1G. The pro-PCSK9 form (via C-terminal domain) interacts with LDLR. Interacts (via the C-terminal domain) with ANXA2 (via repeat Annexin 1); the interaction inhibits the degradation of LDLR. The cofactor is Ca(2+). In terms of processing, cleavage by furin and PCSK5 generates a truncated inactive protein that is unable to induce LDLR degradation. Undergoes autocatalytic cleavage in the endoplasmic reticulum to release the propeptide from the N-terminus and the cleavage of the propeptide is strictly required for its maturation and activation. The cleaved propeptide however remains associated with the catalytic domain through non-covalent interactions, preventing potential substrates from accessing its active site. As a result, it is secreted from cells as a propeptide-containing, enzymatically inactive protein. Post-translationally, phosphorylation protects the propeptide against proteolysis.

It localises to the cytoplasm. Its subcellular location is the secreted. The protein localises to the endosome. The protein resides in the lysosome. It is found in the cell surface. It localises to the endoplasmic reticulum. Its subcellular location is the golgi apparatus. Its proteolytic activity is autoinhibited by the non-covalent binding of the propeptide to the catalytic domain. Inhibited by EGTA. In terms of biological role, crucial player in the regulation of plasma cholesterol homeostasis. Binds to low-density lipid receptor family members: low density lipoprotein receptor (LDLR), very low density lipoprotein receptor (VLDLR), apolipoprotein E receptor (LRP1/APOER) and apolipoprotein receptor 2 (LRP8/APOER2), and promotes their degradation in intracellular acidic compartments. Acts via a non-proteolytic mechanism to enhance the degradation of the hepatic LDLR through a clathrin LDLRAP1/ARH-mediated pathway. May prevent the recycling of LDLR from endosomes to the cell surface or direct it to lysosomes for degradation. Can induce ubiquitination of LDLR leading to its subsequent degradation. Inhibits intracellular degradation of APOB via the autophagosome/lysosome pathway in a LDLR-independent manner. Involved in the disposal of non-acetylated intermediates of BACE1 in the early secretory pathway. Inhibits epithelial Na(+) channel (ENaC)-mediated Na(+) absorption by reducing ENaC surface expression primarily by increasing its proteasomal degradation. Regulates neuronal apoptosis via modulation of LRP8/APOER2 levels and related anti-apoptotic signaling pathways. The polypeptide is Proprotein convertase subtilisin/kexin type 9 (PCSK9) (Macaca mulatta (Rhesus macaque)).